Here is a 310-residue protein sequence, read N- to C-terminus: Translocator protein BipD (310 aa).

2 coiled-coil regions span residues 127 to 171 and 250 to 299; these read DPIL…LQDY and DTAR…AIST.

Belongs to the invasin protein D family.

It is found in the secreted. Functionally, required for invasion of epithelial cells, as well as for survival within host cells, escape from endocytic vesicles and subsequent actin-tail formation. Probably regulates the secretion of effectors BipB and BipC and their final integration into the target cell membrane. This chain is Translocator protein BipD (bipD), found in Burkholderia mallei (strain NCTC 10247).